A 425-amino-acid polypeptide reads, in one-letter code: Adenylosuccinate synthetase (425 aa).

Residues 12-18 (GDEGKGK) and 40-42 (GHT) contribute to the GTP site. Residue Asp13 is the Proton acceptor of the active site. Mg(2+)-binding residues include Asp13 and Gly40. IMP-binding positions include 13 to 16 (DEGK), 38 to 41 (NAGH), Thr127, Arg141, Gln222, Thr237, and Arg301. Catalysis depends on His41, which acts as the Proton donor. 297–303 (AVTGRPR) serves as a coordination point for substrate. Residues Arg303, 329 to 331 (KID), and 411 to 413 (SVG) each bind GTP.

The protein belongs to the adenylosuccinate synthetase family. In terms of assembly, homodimer. The cofactor is Mg(2+).

The protein localises to the cytoplasm. It carries out the reaction IMP + L-aspartate + GTP = N(6)-(1,2-dicarboxyethyl)-AMP + GDP + phosphate + 2 H(+). The protein operates within purine metabolism; AMP biosynthesis via de novo pathway; AMP from IMP: step 1/2. Plays an important role in the de novo pathway of purine nucleotide biosynthesis. Catalyzes the first committed step in the biosynthesis of AMP from IMP. In Fusobacterium nucleatum subsp. nucleatum (strain ATCC 25586 / DSM 15643 / BCRC 10681 / CIP 101130 / JCM 8532 / KCTC 2640 / LMG 13131 / VPI 4355), this protein is Adenylosuccinate synthetase.